The primary structure comprises 192 residues: T-cell surface glycoprotein CD3 epsilon chain (192 aa).

The N-terminal stretch at 1–21 (MQTGNLWQVLGLCLLLVGAWA) is a signal peptide. Topologically, residues 22 to 111 (QDDTEQNPYE…RVCKNCMEVN (90 aa)) are extracellular. Residues 27–98 (QNPYEVSISG…GNTEAAHTLY (72 aa)) form the Ig-like domain. Cys43 and Cys84 are joined by a disulfide. A helical membrane pass occupies residues 112-137 (LLEVATIIVVDICVTLGLLLLVYYWS). At 138-192 (KSRKAKATPMTRGAGAGGRPRGQNRERPPPVPNPDYEPIRKGQRDLYSGLNQRGV) the chain is on the cytoplasmic side. The disordered stretch occupies residues 146–192 (PMTRGAGAGGRPRGQNRERPPPVPNPDYEPIRKGQRDLYSGLNQRGV). The tract at residues 160 to 177 (QNRERPPPVPNPDYEPIR) is NUMB-binding region. The ITAM domain maps to 163-190 (ERPPPVPNPDYEPIRKGQRDLYSGLNQR). The segment at 164 to 171 (RPPPVPNP) is proline-rich sequence. Residues Tyr173 and Tyr184 each carry the phosphotyrosine modification.

In terms of assembly, the TCR-CD3 complex is composed of a CD3D/CD3E and a CD3G/CD3E heterodimers that preferentially associate with TCRalpha and TCRbeta, respectively, to form TCRalpha/CD3E/CD3G and TCRbeta/CD3G/CD3E trimers. In turn, the hexamer interacts with CD3Z homodimer to form the TCR-CD3 complex. Alternatively, TCRalpha and TCRbeta can be replaced by TCRgamma and TCRdelta. Interacts with CD6. Interacts (via Proline-rich sequence) with NCK1; the interaction is ligand dependent but independent of tyrosine kinase activation. Post-translationally, phosphorylated on Tyr residues after T-cell receptor triggering by LCK in association with CD4/CD8.

It localises to the cell membrane. Functionally, part of the TCR-CD3 complex present on T-lymphocyte cell surface that plays an essential role in adaptive immune response. When antigen presenting cells (APCs) activate T-cell receptor (TCR), TCR-mediated signals are transmitted across the cell membrane by the CD3 chains CD3D, CD3E, CD3G and CD3Z. All CD3 chains contain immunoreceptor tyrosine-based activation motifs (ITAMs) in their cytoplasmic domain. Upon TCR engagement, these motifs become phosphorylated by Src family protein tyrosine kinases LCK and FYN, resulting in the activation of downstream signaling pathways. In addition of this role of signal transduction in T-cell activation, CD3E plays an essential role in correct T-cell development. Also participates in internalization and cell surface down-regulation of TCR-CD3 complexes via endocytosis sequences present in CD3E cytosolic region. In addition to its role as a TCR coreceptor, it serves as a receptor for ITPRIPL1. Ligand recognition inhibits T-cell activation by promoting interaction with NCK1, which prevents CD3E-ZAP70 interaction and blocks the ERK-NFkB signaling cascade and calcium influx. This Ovis aries (Sheep) protein is T-cell surface glycoprotein CD3 epsilon chain (CD3E).